Here is a 74-residue protein sequence, read N- to C-terminus: MARVTVEDCLDQVENRFELVILSSKRARQLSNGAEPTLDWDKDKPTVMALRELAENTINKEVVMSDPDTPPFFG.

It belongs to the RNA polymerase subunit omega family. The RNAP catalytic core consists of 2 alpha, 1 beta, 1 beta' and 1 omega subunit. When a sigma factor is associated with the core the holoenzyme is formed, which can initiate transcription.

The enzyme catalyses RNA(n) + a ribonucleoside 5'-triphosphate = RNA(n+1) + diphosphate. In terms of biological role, promotes RNA polymerase assembly. Latches the N- and C-terminal regions of the beta' subunit thereby facilitating its interaction with the beta and alpha subunits. The sequence is that of DNA-directed RNA polymerase subunit omega from Hydrogenovibrio crunogenus (strain DSM 25203 / XCL-2) (Thiomicrospira crunogena).